We begin with the raw amino-acid sequence, 515 residues long: Bifunctional dihydrofolate reductase-thymidylate synthase (515 aa).

The 203-residue stretch at 26–228 folds into the DHFR domain; that stretch reads AFSIVVAADQ…LSYEIMKYVP (203 aa). Valine 30 is a binding site for substrate. NADP(+)-binding positions include alanine 32, 38–44, 81–83, and 101–104; these read GIGDGET, RKT, and LSCR. Substrate-binding residues include isoleucine 154, tyrosine 160, and threonine 178. 155–162 contributes to the NADP(+) binding site; sequence GGARVYTE. Positions 233–515 are thymidylate synthase; it reads ERQYLELIDR…YPPIKMEMAV (283 aa). Arginine 253 contacts dUMP. Cysteine 395 is a catalytic residue. Residues histidine 396, 416 to 420, asparagine 428, and 458 to 460 contribute to the dUMP site; these read QRCCD and HVY.

In the N-terminal section; belongs to the dihydrofolate reductase family. This sequence in the C-terminal section; belongs to the thymidylate synthase family.

The enzyme catalyses (6S)-5,6,7,8-tetrahydrofolate + NADP(+) = 7,8-dihydrofolate + NADPH + H(+). The catalysed reaction is dUMP + (6R)-5,10-methylene-5,6,7,8-tetrahydrofolate = 7,8-dihydrofolate + dTMP. It participates in cofactor biosynthesis; tetrahydrofolate biosynthesis; 5,6,7,8-tetrahydrofolate from 7,8-dihydrofolate: step 1/1. Functionally, bifunctional enzyme. Involved in de novo dTMP biosynthesis. Key enzyme in folate metabolism. Catalyzes an essential reaction for de novo glycine and purine synthesis, DNA precursor synthesis, and for the conversion of dUMP to dTMP. The polypeptide is Bifunctional dihydrofolate reductase-thymidylate synthase (Crithidia fasciculata).